Here is a 316-residue protein sequence, read N- to C-terminus: MYNYLDFEKPVQDLELKILELKKLAENGEAVDVADEITRLEKRSRDALRDLYKALTPWQKVQVARHSDRPHCVDYIKGLFSDFTPLAGDRNFGEDQAIVGGFARFRGEPVAIIGQEKGSDTTSRLRHNFGSVRPEGYRKAVRLMELADRFKIPLLTLVDTAGAYPGVGAEERGQAEAIARSTSACLALKVPSISVVIGEGGSGGAIAIATANRVYMLEHAIYSVISPEGAASILWRDTTRSKDAATNMKITAQDLLELKIIDAIIPEPMGGAQRAPEKVIAATGDLIAKTMKEFAGANTDFREQRREKYLAMGRSL.

Positions leucine 40–glutamate 293 constitute a CoA carboxyltransferase C-terminal domain.

This sequence belongs to the AccA family. Acetyl-CoA carboxylase is a heterohexamer composed of biotin carboxyl carrier protein (AccB), biotin carboxylase (AccC) and two subunits each of ACCase subunit alpha (AccA) and ACCase subunit beta (AccD).

The protein localises to the cytoplasm. It catalyses the reaction N(6)-carboxybiotinyl-L-lysyl-[protein] + acetyl-CoA = N(6)-biotinyl-L-lysyl-[protein] + malonyl-CoA. The protein operates within lipid metabolism; malonyl-CoA biosynthesis; malonyl-CoA from acetyl-CoA: step 1/1. In terms of biological role, component of the acetyl coenzyme A carboxylase (ACC) complex. First, biotin carboxylase catalyzes the carboxylation of biotin on its carrier protein (BCCP) and then the CO(2) group is transferred by the carboxyltransferase to acetyl-CoA to form malonyl-CoA. The sequence is that of Acetyl-coenzyme A carboxylase carboxyl transferase subunit alpha from Mesorhizobium japonicum (strain LMG 29417 / CECT 9101 / MAFF 303099) (Mesorhizobium loti (strain MAFF 303099)).